The chain runs to 95 residues: Pyrimidine/purine nucleoside phosphorylase (95 aa).

This sequence belongs to the nucleoside phosphorylase PpnP family.

It catalyses the reaction a purine D-ribonucleoside + phosphate = a purine nucleobase + alpha-D-ribose 1-phosphate. It carries out the reaction adenosine + phosphate = alpha-D-ribose 1-phosphate + adenine. The enzyme catalyses cytidine + phosphate = cytosine + alpha-D-ribose 1-phosphate. The catalysed reaction is guanosine + phosphate = alpha-D-ribose 1-phosphate + guanine. It catalyses the reaction inosine + phosphate = alpha-D-ribose 1-phosphate + hypoxanthine. It carries out the reaction thymidine + phosphate = 2-deoxy-alpha-D-ribose 1-phosphate + thymine. The enzyme catalyses uridine + phosphate = alpha-D-ribose 1-phosphate + uracil. The catalysed reaction is xanthosine + phosphate = alpha-D-ribose 1-phosphate + xanthine. Functionally, catalyzes the phosphorolysis of diverse nucleosides, yielding D-ribose 1-phosphate and the respective free bases. Can use uridine, adenosine, guanosine, cytidine, thymidine, inosine and xanthosine as substrates. Also catalyzes the reverse reactions. The protein is Pyrimidine/purine nucleoside phosphorylase of Vibrio cholerae serotype O1 (strain ATCC 39315 / El Tor Inaba N16961).